A 324-amino-acid chain; its full sequence is GTPase Era (324 aa).

The 169-residue stretch at 31–199 (KSGFIGIIGR…QELLVEHLEH (169 aa)) folds into the Era-type G domain. The segment at 39–46 (GRPNVGKS) is G1. 39–46 (GRPNVGKS) contributes to the GTP binding site. The interval 65-69 (QTTRN) is G2. The interval 86–89 (DTPG) is G3. Residues 86–90 (DTPGI) and 148–151 (NKVD) contribute to the GTP site. The tract at residues 148-151 (NKVD) is G4. The segment at 178-180 (FSA) is G5. One can recognise a KH type-2 domain in the interval 230-306 (TREEVPHSVA…YLELFVKVQP (77 aa)).

This sequence belongs to the TRAFAC class TrmE-Era-EngA-EngB-Septin-like GTPase superfamily. Era GTPase family. In terms of assembly, monomer.

The protein resides in the cytoplasm. The protein localises to the cell inner membrane. In terms of biological role, an essential GTPase that binds both GDP and GTP, with rapid nucleotide exchange. Plays a role in 16S rRNA processing and 30S ribosomal subunit biogenesis and possibly also in cell cycle regulation and energy metabolism. The chain is GTPase Era from Nostoc sp. (strain PCC 7120 / SAG 25.82 / UTEX 2576).